Here is a 122-residue protein sequence, read N- to C-terminus: Large ribosomal subunit protein uL14 (122 aa).

The protein belongs to the universal ribosomal protein uL14 family. Part of the 50S ribosomal subunit. Forms a cluster with proteins L3 and L19. In the 70S ribosome, L14 and L19 interact and together make contacts with the 16S rRNA in bridges B5 and B8.

Functionally, binds to 23S rRNA. Forms part of two intersubunit bridges in the 70S ribosome. The polypeptide is Large ribosomal subunit protein uL14 (Rickettsia massiliae (strain Mtu5)).